The sequence spans 1038 residues: TonB-dependent receptor P39 (1038 aa).

Positions Met-1–Ala-39 are cleaved as a signal peptide. A TonB box motif is present at residues Asp-120–Tyr-127. The TBDR plug domain maps to Lys-131–Lys-243. Residues Phe-249–Phe-1038 enclose the TBDR beta-barrel domain. Positions Ser-1021–Phe-1038 match the TonB C-terminal box motif.

Belongs to the TonB-dependent receptor family.

It is found in the cell outer membrane. TonB-dependent receptor probably involved in ulvan degradation. Ulvan is the main polysaccharide component of the Ulvales (green seaweed) cell wall. It is composed of disaccharide building blocks comprising 3-sulfated rhamnose (Rha3S) linked to D-glucuronic acid (GlcA), L-iduronic acid (IduA), or D-xylose (Xyl). The TonB-dependent receptor may mediate transport of ulvan oligosaccharides from the surface of the outer membrane to the periplasm for subsequent degradation. This is TonB-dependent receptor P39 from Formosa agariphila (strain DSM 15362 / KCTC 12365 / LMG 23005 / KMM 3901 / M-2Alg 35-1).